A 991-amino-acid chain; its full sequence is MLRLLFIVRLLFLMPLASSRSNHSEEVENLLKLKSTFGETKSDDVFKTWTHRNSACEFAGIVCNSDGNVVEINLGSRSLINRDDDGRFTDLPFDSICDLKLLEKLVLGNNSLRGQIGTNLGKCNRLRYLDLGINNFSGEFPAIDSLQLLEFLSLNASGISGIFPWSSLKDLKRLSFLSVGDNRFGSHPFPREILNLTALQWVYLSNSSITGKIPEGIKNLVRLQNLELSDNQISGEIPKEIVQLKNLRQLEIYSNDLTGKLPLGFRNLTNLRNFDASNNSLEGDLSELRFLKNLVSLGMFENRLTGEIPKEFGDFKSLAALSLYRNQLTGKLPRRLGSWTAFKYIDVSENFLEGQIPPYMCKKGVMTHLLMLQNRFTGQFPESYAKCKTLIRLRVSNNSLSGMIPSGIWGLPNLQFLDLASNYFEGNLTGDIGNAKSLGSLDLSNNRFSGSLPFQISGANSLVSVNLRMNKFSGIVPESFGKLKELSSLILDQNNLSGAIPKSLGLCTSLVDLNFAGNSLSEEIPESLGSLKLLNSLNLSGNKLSGMIPVGLSALKLSLLDLSNNQLTGSVPESLVSGSFEGNSGLCSSKIRYLRPCPLGKPHSQGKRKHLSKVDMCFIVAAILALFFLFSYVIFKIRRDKLNKTVQKKNDWQVSSFRLLNFNEMEIIDEIKSENIIGRGGQGNVYKVSLRSGETLAVKHIWCPESSHESFRSSTAMLSDGNNRSNNGEFEAEVATLSNIKHINVVKLFCSITCEDSKLLVYEYMPNGSLWEQLHERRGEQEIGWRVRQALALGAAKGLEYLHHGLDRPVIHRDVKSSNILLDEEWRPRIADFGLAKIIQADSVQRDFSAPLVKGTLGYIAPEYAYTTKVNEKSDVYSFGVVLMELVTGKKPLETDFGENNDIVMWVWSVSKETNREMMMKLIDTSIEDEYKEDALKVLTIALLCTDKSPQARPFMKSVVSMLEKIEPSYNKNSGEASYGESANDEITKVV.

An N-terminal signal peptide occupies residues 1-19 (MLRLLFIVRLLFLMPLASS). The Extracellular segment spans residues 20-616 (RSNHSEEVEN…KRKHLSKVDM (597 aa)). Asn-22 is a glycosylation site (N-linked (GlcNAc...) asparagine). LRR repeat units lie at residues 66–90 (DGNVVEINLGSRSLINRDDDGRFTD), 99–123 (LKLLEKLVLGNNSLRGQIGTNLGKC), 125–148 (RLRYLDLGINNFSGEFPAIDSLQL), 150–170 (EFLSLNASGISGIFPWSSLKD), 171–196 (LKRLSFLSVGDNRFGSHPFPREILNL), 197–220 (TALQWVYLSNSSITGKIPEGIKNL), 221–244 (VRLQNLELSDNQISGEIPKEIVQL), 246–267 (NLRQLEIYSNDLTGKLPLGFRN), 269–291 (TNLRNFDASNNSLEGDLSELRFL), 292–314 (KNLVSLGMFENRLTGEIPKEFGD), 315–339 (FKSLAALSLYRNQLTGKLPRRLGSW), 341–363 (AFKYIDVSENFLEGQIPPYMCKK), 365–387 (VMTHLLMLQNRFTGQFPESYAKC), 388–411 (KTLIRLRVSNNSLSGMIPSGIWGL), 413–435 (NLQFLDLASNYFEGNLTGDIGNA), 436–459 (KSLGSLDLSNNRFSGSLPFQISGA), 461–482 (SLVSVNLRMNKFSGIVPESFGK), 483–508 (LKELSSLILDQNNLSGAIPKSLGLCT), 510–531 (LVDLNFAGNSLSEEIPESLGSL), 532–554 (KLLNSLNLSGNKLSGMIPVGLSA), and 555–578 (LKLSLLDLSNNQLTGSVPESLVSG). 5 N-linked (GlcNAc...) asparagine glycosylation sites follow: Asn-109, Asn-135, Asn-155, Asn-195, and Asn-206. 2 N-linked (GlcNAc...) asparagine glycosylation sites follow: Asn-267 and Asn-278. Asn-397 and Asn-427 each carry an N-linked (GlcNAc...) asparagine glycan. N-linked (GlcNAc...) asparagine glycosylation is present at Asn-495. N-linked (GlcNAc...) asparagine glycosylation is present at Asn-538. The helical transmembrane segment at 617 to 637 (CFIVAAILALFFLFSYVIFKI) threads the bilayer. Residues 638-991 (RRDKLNKTVQ…SANDEITKVV (354 aa)) are Cytoplasmic-facing. One can recognise a Protein kinase domain in the interval 671 to 970 (IKSENIIGRG…SMLEKIEPSY (300 aa)). ATP-binding positions include 677–685 (IGRGGQGNV) and Lys-699. 2 positions are modified to phosphotyrosine: Tyr-762 and Tyr-801. The active-site Proton acceptor is Asp-814. 2 positions are modified to phosphotyrosine: Tyr-859 and Tyr-866. Thr-867 bears the Phosphothreonine mark. The tract at residues 972 to 991 (KNSGEASYGESANDEITKVV) is disordered.

Belongs to the protein kinase superfamily. Ser/Thr protein kinase family. In terms of tissue distribution, expressed in the endosperm of fertilized ovules.

It is found in the membrane. It catalyses the reaction L-seryl-[protein] + ATP = O-phospho-L-seryl-[protein] + ADP + H(+). The catalysed reaction is L-threonyl-[protein] + ATP = O-phospho-L-threonyl-[protein] + ADP + H(+). Functionally, modulates the seed size by negatively regulating the cellularization of syncytial endosperm. This chain is Receptor-like protein kinase HAIKU2 (IKU2), found in Arabidopsis thaliana (Mouse-ear cress).